A 435-amino-acid polypeptide reads, in one-letter code: GTPase Der (435 aa).

2 consecutive EngA-type G domains span residues 4–167 and 175–350; these read PVVA…PAEK and ISFS…DNQN. GTP contacts are provided by residues 10–17, 57–61, 119–122, 181–188, 228–232, and 293–296; these read GQPNVGKS, DTGGI, NKAD, GRPNVGKS, DTAGI, and NKWD. The KH-like domain maps to 351-435; the sequence is QRIQSSVLND…PIKILPRKRK (85 aa).

Belongs to the TRAFAC class TrmE-Era-EngA-EngB-Septin-like GTPase superfamily. EngA (Der) GTPase family. As to quaternary structure, associates with the 50S ribosomal subunit.

Its function is as follows. GTPase that plays an essential role in the late steps of ribosome biogenesis. The sequence is that of GTPase Der from Lactobacillus helveticus (strain DPC 4571).